Here is a 544-residue protein sequence, read N- to C-terminus: Chaperonin GroEL (544 aa).

Residues 29-32 (TLGP), K50, 86-90 (DGTTT), G414, and D495 contribute to the ATP site.

Belongs to the chaperonin (HSP60) family. Forms a cylinder of 14 subunits composed of two heptameric rings stacked back-to-back. Interacts with the co-chaperonin GroES.

The protein resides in the cytoplasm. The catalysed reaction is ATP + H2O + a folded polypeptide = ADP + phosphate + an unfolded polypeptide.. Together with its co-chaperonin GroES, plays an essential role in assisting protein folding. The GroEL-GroES system forms a nano-cage that allows encapsulation of the non-native substrate proteins and provides a physical environment optimized to promote and accelerate protein folding. This chain is Chaperonin GroEL, found in Treponema pallidum subsp. pallidum (strain SS14).